Reading from the N-terminus, the 381-residue chain is ADP,ATP carrier protein 1, mitochondrial (381 aa).

Residues 1–70 (MVDQVQHPTI…ATTASPVFVQ (70 aa)) constitute a mitochondrion transit peptide. Solcar repeat units follow at residues 78–171 (TNFA…FKRL), 183–276 (KWFA…VKPV), and 284–370 (DSFF…LQLI). The next 5 helical transmembrane spans lie at 80–107 (FALDFLMGGVSAAVSKTAAAPIERVKLL), 148–172 (TANVIRYFPTQALNFAFKDYFKRLF), 181–201 (YWKWFAGNLASGGAAGASSLL), 252–273 (FNISCVGIIVYRGLYFGLYDSV), and 287–307 (FASFALGWVITNGAGLASYPI). The ADP site is built by arginine 153 and lysine 165. Residue arginine 311 coordinates ADP. Residues 311 to 316 (RRRMMM) are important for transport activity. Positions 311–316 (RRRMMM) match the Nucleotide carrier signature motif motif. The helical transmembrane segment at 347–367 (AGANILRAVAGAGVLSGYDKL) threads the bilayer.

Belongs to the mitochondrial carrier (TC 2.A.29) family. In terms of assembly, monomer.

It localises to the mitochondrion inner membrane. The enzyme catalyses ADP(in) + ATP(out) = ADP(out) + ATP(in). Its activity is regulated as follows. The matrix-open state (m-state) is inhibited by the membrane-permeable bongkrekic acid (BKA). The cytoplasmic-open state (c-state) is inhibited by the membrane-impermeable toxic inhibitor carboxyatractyloside (CATR). ADP:ATP antiporter that mediates import of ADP into the mitochondrial matrix for ATP synthesis, and export of ATP out to fuel the cell. Cycles between the cytoplasmic-open state (c-state) and the matrix-open state (m-state): operates by the alternating access mechanism with a single substrate-binding site intermittently exposed to either the cytosolic (c-state) or matrix (m-state) side of the inner mitochondrial membrane. This is ADP,ATP carrier protein 1, mitochondrial (AAC1) from Arabidopsis thaliana (Mouse-ear cress).